We begin with the raw amino-acid sequence, 130 residues long: Small ribosomal subunit protein uS11c (130 aa).

The protein belongs to the universal ribosomal protein uS11 family. Part of the 30S ribosomal subunit.

The protein localises to the plastid. It localises to the chloroplast. The protein is Small ribosomal subunit protein uS11c of Chara vulgaris (Common stonewort).